Consider the following 162-residue polypeptide: ATP synthase subunit b (162 aa).

The chain crosses the membrane as a helical span at residues 10–29; that stretch reads LIWTIINFAVLLWGMHRFLY.

Belongs to the ATPase B chain family. As to quaternary structure, F-type ATPases have 2 components, F(1) - the catalytic core - and F(0) - the membrane proton channel. F(1) has five subunits: alpha(3), beta(3), gamma(1), delta(1), epsilon(1). F(0) has three main subunits: a(1), b(2) and c(10-14). The alpha and beta chains form an alternating ring which encloses part of the gamma chain. F(1) is attached to F(0) by a central stalk formed by the gamma and epsilon chains, while a peripheral stalk is formed by the delta and b chains.

Its subcellular location is the cell membrane. F(1)F(0) ATP synthase produces ATP from ADP in the presence of a proton or sodium gradient. F-type ATPases consist of two structural domains, F(1) containing the extramembraneous catalytic core and F(0) containing the membrane proton channel, linked together by a central stalk and a peripheral stalk. During catalysis, ATP synthesis in the catalytic domain of F(1) is coupled via a rotary mechanism of the central stalk subunits to proton translocation. Its function is as follows. Component of the F(0) channel, it forms part of the peripheral stalk, linking F(1) to F(0). This Symbiobacterium thermophilum (strain DSM 24528 / JCM 14929 / IAM 14863 / T) protein is ATP synthase subunit b.